The chain runs to 450 residues: Tubulin alpha chain (450 aa).

The MREC motif motif lies at 1-4; that stretch reads MREC. Gln11 contributes to the GTP binding site. At Lys40 the chain carries N6-acetyllysine. GTP is bound by residues Glu71, Ser140, Gly144, Thr145, Thr179, Asn206, and Asn228. Residue Glu71 participates in Mg(2+) binding. The active site involves Glu254. Position 444 is a 5-glutamyl polyglutamate (Glu444).

The protein belongs to the tubulin family. In terms of assembly, dimer of alpha and beta chains. A typical microtubule is a hollow water-filled tube with an outer diameter of 25 nm and an inner diameter of 15 nM. Alpha-beta heterodimers associate head-to-tail to form protofilaments running lengthwise along the microtubule wall with the beta-tubulin subunit facing the microtubule plus end conferring a structural polarity. Microtubules usually have 13 protofilaments but different protofilament numbers can be found in some organisms and specialized cells. Mg(2+) serves as cofactor. In terms of processing, some glutamate residues at the C-terminus are polyglycylated, resulting in polyglycine chains on the gamma-carboxyl group. Glycylation is mainly limited to tubulin incorporated into axonemes (cilia and flagella) whereas glutamylation is prevalent in neuronal cells, centrioles, axonemes, and the mitotic spindle. Both modifications can coexist on the same protein on adjacent residues, and lowering polyglycylation levels increases polyglutamylation, and reciprocally. The precise function of polyglycylation is still unclear. Some glutamate residues at the C-terminus are polyglutamylated, resulting in polyglutamate chains on the gamma-carboxyl group. Polyglutamylation plays a key role in microtubule severing by spastin (SPAST). SPAST preferentially recognizes and acts on microtubules decorated with short polyglutamate tails: severing activity by SPAST increases as the number of glutamates per tubulin rises from one to eight, but decreases beyond this glutamylation threshold. Post-translationally, acetylation of alpha chains at Lys-40 is located inside the microtubule lumen. This modification has been correlated with increased microtubule stability, intracellular transport and ciliary assembly. In terms of processing, undergoes a tyrosination/detyrosination cycle, the cyclic removal and re-addition of a C-terminal tyrosine residue by the enzymes tubulin tyrosine carboxypeptidase (MATCAP, VASH1 or VASH2) and tubulin tyrosine ligase (TTL), respectively. Tyrosination promotes microtubule interaction with CAP-Gly microtubule plus-end tracking proteins. Tyrosinated tubulins regulate the initiation of dynein-driven motility. Post-translationally, detyrosination is involved in metaphase plate congression by guiding chromosomes during mitosis. Detyrosination increases microtubules-dependent mechanotransduction in dystrophic cardiac and skeletal muscle. In cardiomyocytes, detyrosinated microtubules are required to resist to contractile compression during contraction.

Its subcellular location is the cytoplasm. It is found in the cytoskeleton. The catalysed reaction is GTP + H2O = GDP + phosphate + H(+). Functionally, tubulin is the major constituent of microtubules, a cylinder consisting of laterally associated linear protofilaments composed of alpha- and beta-tubulin heterodimers. Microtubules grow by the addition of GTP-tubulin dimers to the microtubule end, where a stabilizing cap forms. Below the cap, tubulin dimers are in GDP-bound state, owing to GTPase activity of alpha-tubulin. This is Tubulin alpha chain from Notophthalmus viridescens (Eastern newt).